The following is a 916-amino-acid chain: Protein translocase subunit SecA (916 aa).

Residues Q87, 105–109, and D512 contribute to the ATP site; that span reads GEGKT. The segment at 857–916 is disordered; that stretch reads QHAEAPSMEQAVAGEDEELPEGPAPVVPLEPVRNEQKIGRNEPCPCGSGKKYKHCHGQLD. Residues C900, C902, C911, and H912 each contribute to the Zn(2+) site. A compositionally biased stretch (basic residues) spans 906–916; it reads KKYKHCHGQLD.

This sequence belongs to the SecA family. As to quaternary structure, monomer and homodimer. Part of the essential Sec protein translocation apparatus which comprises SecA, SecYEG and auxiliary proteins SecDF-YajC and YidC. The cofactor is Zn(2+).

The protein resides in the cell inner membrane. Its subcellular location is the cytoplasm. It carries out the reaction ATP + H2O + cellular proteinSide 1 = ADP + phosphate + cellular proteinSide 2.. Part of the Sec protein translocase complex. Interacts with the SecYEG preprotein conducting channel. Has a central role in coupling the hydrolysis of ATP to the transfer of proteins into and across the cell membrane, serving both as a receptor for the preprotein-SecB complex and as an ATP-driven molecular motor driving the stepwise translocation of polypeptide chains across the membrane. This chain is Protein translocase subunit SecA, found in Pseudomonas paraeruginosa (strain DSM 24068 / PA7) (Pseudomonas aeruginosa (strain PA7)).